Consider the following 665-residue polypeptide: Glycine--tRNA ligase beta subunit (665 aa).

Belongs to the class-II aminoacyl-tRNA synthetase family. In terms of assembly, tetramer of two alpha and two beta subunits.

It is found in the cytoplasm. It carries out the reaction tRNA(Gly) + glycine + ATP = glycyl-tRNA(Gly) + AMP + diphosphate. In Rickettsia prowazekii (strain Madrid E), this protein is Glycine--tRNA ligase beta subunit (glyS).